The sequence spans 389 residues: MNFHEYQSKQLLAEYGIPVPAGKVAATPDEAVAAANSLGQGPWMVKAQIHAGGRGKAGGVKFCKTTDDVKAAAAKMLGTKMATYQTAGVELPVNLVLVTTAGEIVKELYLSVLVDRGTKTITYIASSEGGVEIEQVAAETPELIHSLNVDFVEGVQGYHGRDFGFKLGLTAKQAGQFASIMVNLYRLFNEKDLALVEINPLAILDDGNLYALDGKFDSDDNAAFRQKALVAMRDKTQEDPTEVIASELDINYVTMDGNIGCMVNGAGLAMATMDVIKLNGGEPANFLDVGGGANKQRVIEAFKLILSSDKVEGIFVNIFGGIVRCDMIAEGIIAAVKEVGVKVPVVVRLEGTNVEEGKQLLRDSGMAIIPADNINDGAKKIVEAVKNAA.

Residues 9–244 (KQLLAEYGIP…KTQEDPTEVI (236 aa)) form the ATP-grasp domain. ATP contacts are provided by residues Lys-46, 53–55 (GRG), Gly-102, and Glu-107. 2 residues coordinate Mg(2+): Asn-199 and Asp-213. Substrate contacts are provided by residues Asn-264 and 321–323 (GIV).

This sequence belongs to the succinate/malate CoA ligase beta subunit family. Heterotetramer of two alpha and two beta subunits. Mg(2+) is required as a cofactor.

The enzyme catalyses succinate + ATP + CoA = succinyl-CoA + ADP + phosphate. The catalysed reaction is GTP + succinate + CoA = succinyl-CoA + GDP + phosphate. It functions in the pathway carbohydrate metabolism; tricarboxylic acid cycle; succinate from succinyl-CoA (ligase route): step 1/1. Functionally, succinyl-CoA synthetase functions in the citric acid cycle (TCA), coupling the hydrolysis of succinyl-CoA to the synthesis of either ATP or GTP and thus represents the only step of substrate-level phosphorylation in the TCA. The beta subunit provides nucleotide specificity of the enzyme and binds the substrate succinate, while the binding sites for coenzyme A and phosphate are found in the alpha subunit. This Stenotrophomonas maltophilia (strain R551-3) protein is Succinate--CoA ligase [ADP-forming] subunit beta.